The following is a 634-amino-acid chain: DNA-directed RNA polymerase subunit gamma (634 aa).

Residues Cys-74, Cys-76, Cys-89, and Cys-92 each coordinate Zn(2+). Residues Asp-471, Asp-473, and Asp-475 each coordinate Mg(2+).

It belongs to the RNA polymerase beta' chain family. RpoC1 subfamily. As to quaternary structure, in cyanobacteria the RNAP catalytic core is composed of 2 alpha, 1 beta, 1 beta', 1 gamma and 1 omega subunit. When a sigma factor is associated with the core the holoenzyme is formed, which can initiate transcription. Requires Mg(2+) as cofactor. Zn(2+) is required as a cofactor.

It carries out the reaction RNA(n) + a ribonucleoside 5'-triphosphate = RNA(n+1) + diphosphate. DNA-dependent RNA polymerase catalyzes the transcription of DNA into RNA using the four ribonucleoside triphosphates as substrates. The sequence is that of DNA-directed RNA polymerase subunit gamma from Parasynechococcus marenigrum (strain WH8102).